Reading from the N-terminus, the 314-residue chain is Ribosomal protein L11 methyltransferase (314 aa).

S-adenosyl-L-methionine contacts are provided by T163, G184, D206, and N248.

This sequence belongs to the methyltransferase superfamily. PrmA family.

It is found in the cytoplasm. It carries out the reaction L-lysyl-[protein] + 3 S-adenosyl-L-methionine = N(6),N(6),N(6)-trimethyl-L-lysyl-[protein] + 3 S-adenosyl-L-homocysteine + 3 H(+). Its function is as follows. Methylates ribosomal protein L11. In Lactobacillus delbrueckii subsp. bulgaricus (strain ATCC BAA-365 / Lb-18), this protein is Ribosomal protein L11 methyltransferase.